Reading from the N-terminus, the 121-residue chain is Large ribosomal subunit protein uL14c (121 aa).

It belongs to the universal ribosomal protein uL14 family. As to quaternary structure, part of the 50S ribosomal subunit.

It is found in the plastid. It localises to the chloroplast. Its function is as follows. Binds to 23S rRNA. The polypeptide is Large ribosomal subunit protein uL14c (Tetradesmus obliquus (Green alga)).